Here is a 372-residue protein sequence, read N- to C-terminus: tRNA-specific 2-thiouridylase MnmA (372 aa).

Residues 17-24 (GMSGGVDS) and Met43 contribute to the ATP site. An interaction with target base in tRNA region spans residues 103 to 105 (NPD). Cys108 functions as the Nucleophile in the catalytic mechanism. Cys108 and Cys205 are joined by a disulfide. Position 133 (Gly133) interacts with ATP. The interval 155–157 (KDQ) is interaction with tRNA. Cys205 acts as the Cysteine persulfide intermediate in catalysis. Residues 317-318 (RY) form an interaction with tRNA region.

It belongs to the MnmA/TRMU family.

The protein localises to the cytoplasm. It carries out the reaction S-sulfanyl-L-cysteinyl-[protein] + uridine(34) in tRNA + AH2 + ATP = 2-thiouridine(34) in tRNA + L-cysteinyl-[protein] + A + AMP + diphosphate + H(+). Catalyzes the 2-thiolation of uridine at the wobble position (U34) of tRNA, leading to the formation of s(2)U34. The protein is tRNA-specific 2-thiouridylase MnmA of Shewanella sediminis (strain HAW-EB3).